A 79-amino-acid chain; its full sequence is Short neurotoxin 2 (79 aa).

An N-terminal signal peptide occupies residues 1–21 (MKTLLLTLVMVTIMCLDLGYT). 4 disulfide bridges follow: C24/C41, C34/C59, C63/C71, and C72/C77.

It belongs to the three-finger toxin family. Short-chain subfamily. Type III alpha-neurotoxin sub-subfamily. In terms of tissue distribution, expressed by the venom gland.

Its subcellular location is the secreted. Its function is as follows. Binds with high affinity to muscle nicotinic acetylcholine receptor (nAChR) and hinders acetylcholine binding to the receptor, thereby impairing neuromuscular transmission. Competes with the binding of alpha-bungarotoxin on muscle AChR (from Torpedo) with an IC(50) of 0.30 uM. Causes muscle paralysis, spasms and increased respiration. This is Short neurotoxin 2 from Pseudonaja textilis (Eastern brown snake).